A 229-amino-acid polypeptide reads, in one-letter code: MAQNGTGGGSRRPRRGRRNNNNNNSTARDKALLALTQQVNRLANIASSSAPSLQHPTFIASKKCRAGYTYTSLDVRPTRTEKDKSFGQRLIIPVPVSEYPKKKVSCVQVRLNPSPKFNSTIWVSLRRLDETTLLTSENVFKLFTDGLAAVLIYQHVPTGIQPNNKITFDMSNVGAEIGDMGKYALIVYSKDDVLEADEMVIHIDIEHQRIPSLQRSRCDSTRMHDVRRR.

At M1 the chain carries N-acetylmethionine; by host. Residues 1–10 are compositionally biased toward gly residues; the sequence is MAQNGTGGGS. A disordered region spans residues 1-28; that stretch reads MAQNGTGGGSRRPRRGRRNNNNNNSTAR. An intrachain disulfide couples C64 to C106.

This sequence belongs to the cucumovirus capsid protein family.

The protein localises to the virion. Capsid protein. Probably binds RNA and plays a role in packaging. This Canna (Florist's daisy) protein is Capsid protein.